We begin with the raw amino-acid sequence, 210 residues long: PEP-dependent dihydroxyacetone kinase, ADP-binding subunit DhaL (210 aa).

The region spanning 6–206 (TQIVNWLTRC…VMFMMQMLAL (201 aa)) is the DhaL domain. Positions 30, 35, and 37 each coordinate Mg(2+). ADP is bound by residues 38-41 (HGLN), 79-80 (AS), Gly-121, Met-130, Arg-178, and 191-193 (DPG).

Homodimer. The dihydroxyacetone kinase complex is composed of a homodimer of DhaM, a homodimer of DhaK and the subunit DhaL. DhaL also forms a complex with DhaR. Requires Mg(2+) as cofactor.

Its subcellular location is the cytoplasm. It carries out the reaction dihydroxyacetone + phosphoenolpyruvate = dihydroxyacetone phosphate + pyruvate. Its pathway is polyol metabolism; glycerol degradation. Functionally, ADP-binding subunit of the dihydroxyacetone kinase, which is responsible for the phosphoenolpyruvate (PEP)-dependent phosphorylation of dihydroxyacetone. DhaL-ADP is converted to DhaL-ATP via a phosphoryl group transfer from DhaM and transmits it to dihydroxyacetone bound to DhaK. DhaL also acts as coactivator of the transcription activator DhaR by binding to the sensor domain of DhaR. In the presence of dihydroxyacetone, DhaL-ADP displaces DhaK and stimulates DhaR activity. In the absence of dihydroxyacetone, DhaL-ADP is converted by the PTS to DhaL-ATP, which does not bind to DhaR. In Escherichia coli (strain K12), this protein is PEP-dependent dihydroxyacetone kinase, ADP-binding subunit DhaL.